A 334-amino-acid chain; its full sequence is Ornithine carbamoyltransferase (334 aa).

Residues 56–59, Q83, R107, and 134–137 contribute to the carbamoyl phosphate site; these read STRT and HPTQ. L-ornithine contacts are provided by residues N168, D232, and 236–237; that span reads SM. Carbamoyl phosphate-binding positions include 274–275 and R320; that span reads CL.

It belongs to the aspartate/ornithine carbamoyltransferase superfamily. OTCase family.

It localises to the cytoplasm. The catalysed reaction is carbamoyl phosphate + L-ornithine = L-citrulline + phosphate + H(+). It participates in amino-acid biosynthesis; L-arginine biosynthesis; L-arginine from L-ornithine and carbamoyl phosphate: step 1/3. In terms of biological role, reversibly catalyzes the transfer of the carbamoyl group from carbamoyl phosphate (CP) to the N(epsilon) atom of ornithine (ORN) to produce L-citrulline. This Shigella sonnei (strain Ss046) protein is Ornithine carbamoyltransferase.